The sequence spans 463 residues: Probable glycosyltransferase 3 (463 aa).

Positions 1 to 20 are disordered; sequence MAVTGGGRPAARQQAARGKQ. Residues 1–24 are Cytoplasmic-facing; the sequence is MAVTGGGRPAARQQAARGKQMQRT. Positions 9–20 are enriched in low complexity; that stretch reads PAARQQAARGKQ. Residues 25–47 traverse the membrane as a helical; Signal-anchor for type II membrane protein segment; that stretch reads FNNVKITLICGFITLLVLRGTVG. The Lumenal portion of the chain corresponds to 48–463; the sequence is INLLTYGVGG…ALKMDAKIES (416 aa). The interval 82-125 is disordered; that stretch reads EIRSDTDDDDDDEEEEPLGVDASTTTTTNSTTTTATAARRRSSN. Residues 87-99 are compositionally biased toward acidic residues; it reads TDDDDDDEEEEPL. The span at 103 to 118 shows a compositional bias: low complexity; it reads ASTTTTTNSTTTTATA. 3 N-linked (GlcNAc...) asparagine glycosylation sites follow: N110, N125, and N442.

The protein belongs to the glycosyltransferase 34 family.

The protein localises to the golgi apparatus membrane. Functionally, probable glycosyltransferase that may be involved in the biosynthesis of xyloglucan. This is Probable glycosyltransferase 3 from Oryza sativa subsp. indica (Rice).